The following is a 253-amino-acid chain: MRELIPKEYNVLSITGGQKNERELEKMCNYDVLIYNSAISAGHSIDIKDHFDSVFLVVNSPTPNGRWVTARIDEMFQMAARVRNPITKKIYITTDTFHYRNKACTVNGDEEYYSAAMKSGFDILMSGRNIVPNQLAAMCKSEFEVLVLDWITTKAFPGSIITEEYLNGSQTAEVVLNNDHVFSIQADQFHLAVIEDSLSNPKKYIDCVAGVRRRKAVPVDVFYENEEHIAALKALPYIEYFDSKRQVEVRMLQ.

This is an uncharacterized protein from Ostreid herpesvirus 1 (isolate France) (OsHV-1).